The primary structure comprises 243 residues: Proteasome subunit beta (243 aa).

2 stretches are compositionally biased toward basic and acidic residues: residues 1 to 11 (MRTPTHDEFSG) and 33 to 47 (NADR…KETK). The propeptide at 1 to 49 (MRTPTHDEFSGRLDSLNGDRSNVFGPELGEFSNADRRADELGDKETKTG) is removed in mature form; by autocatalysis. Residues 1-50 (MRTPTHDEFSGRLDSLNGDRSNVFGPELGEFSNADRRADELGDKETKTGT) form a disordered region. Residue threonine 50 is the Nucleophile of the active site. Residue serine 129 is modified to Phosphoserine.

This sequence belongs to the peptidase T1B family. In terms of assembly, the 20S proteasome core is composed of 14 alpha and 14 beta subunits that assemble into four stacked heptameric rings, resulting in a barrel-shaped structure. The two inner rings, each composed of seven catalytic beta subunits, are sandwiched by two outer rings, each composed of seven alpha subunits. H.volcanii produces at least 2 types of 20S proteasomes: an alpha1-beta proteasome and a proteasome containing all three subunits (alpha1, alpha2, and beta) that appears to be asymmetrical with homo-oligomeric alpha1 and alpha2 rings positioned on separate ends. The catalytic chamber with the active sites is on the inside of the barrel. Has probably a gated structure, the ends of the cylinder being occluded by the N-termini of the alpha-subunits. Is likely capped at one or both ends by the proteasome regulatory ATPase, PAN.

Its subcellular location is the cytoplasm. The enzyme catalyses Cleavage of peptide bonds with very broad specificity.. With respect to regulation, the formation of the proteasomal ATPase PAN-20S proteasome complex, via the docking of the C-termini of PAN into the intersubunit pockets in the alpha-rings, triggers opening of the gate for substrate entry. Interconversion between the open-gate and close-gate conformations leads to a dynamic regulation of the 20S proteasome proteolysis activity. In vitro, the chymotrypsin-like activity of the alpha1-beta proteasome is potently inhibited by carbobenzoxyl-leucinyl-leucinyl-leucinal-H (MG132) and significantly by N-acetyl-leucinyl-leucinyl-norleucinal-H (calpain inhibitor I). Component of the proteasome core, a large protease complex with broad specificity involved in protein degradation. The H.volcanii alpha1-beta proteasome is able to cleave oligopeptides after Phe, Tyr and Trp, poorly after Glu but not after Arg. Thus, displays chymotrypsin-like activity, low caspase-like activity but no trypsin-like activity. The protein is Proteasome subunit beta of Haloferax volcanii (strain ATCC 29605 / DSM 3757 / JCM 8879 / NBRC 14742 / NCIMB 2012 / VKM B-1768 / DS2) (Halobacterium volcanii).